Here is a 530-residue protein sequence, read N- to C-terminus: B3 domain-containing protein REM-like 3 (530 aa).

2 consecutive DNA-binding regions (TF-B3) follow at residues 11–103 (KPHF…FGLS) and 144–241 (DFVV…FPLE). Residues 251 to 276 (SKKVKQEVEHEESVKEETNVESGKLK) are disordered. The segment covering 254 to 276 (VKQEVEHEESVKEETNVESGKLK) has biased composition (basic and acidic residues). 2 consecutive DNA-binding regions (TF-B3) follow at residues 296–393 (NFVV…FPLE) and 431–530 (SFVV…WDKK).

The protein resides in the nucleus. This is B3 domain-containing protein REM-like 3 from Arabidopsis thaliana (Mouse-ear cress).